Reading from the N-terminus, the 210-residue chain is Large ribosomal subunit protein bL25 (210 aa).

Belongs to the bacterial ribosomal protein bL25 family. CTC subfamily. As to quaternary structure, part of the 50S ribosomal subunit; part of the 5S rRNA/L5/L18/L25 subcomplex. Contacts the 5S rRNA. Binds to the 5S rRNA independently of L5 and L18.

Functionally, this is one of the proteins that binds to the 5S RNA in the ribosome where it forms part of the central protuberance. The sequence is that of Large ribosomal subunit protein bL25 from Herminiimonas arsenicoxydans.